The primary structure comprises 357 residues: MSSSLFAPTIETIDYPFPPKPVPLSDAQKADYKARIKQLLIEKDAVLVAHYYTDPEIQALAEETGGCVSDSLEMARFGRDHPAKTLIVAGVKFMGETAKILSPEKTILMPTLEATCSLDLGCPIDKFSAFCDAHPDHTVVVYANTSAAVKARADWVVTSSIALEIVEHLDSEGKKIIWGPDRHLGSYIAKQTGAEMLMWQGDCIVHDEFKANALRDLKSVYPDAAILVHPESPASVVAMADAVGSTSQLIKAAQTMPNERFIVATDRGIFYKMQQAAPGKTLIEAPTGGNGATCKSCAHCPWMAMNGLKAIEASLSNSDKTTHEIFVDEDLRVKALIPLTRMLDFAKTLNMKVKGNA.

His-50 and Ser-71 together coordinate iminosuccinate. Cys-116 contacts [4Fe-4S] cluster. Iminosuccinate-binding positions include 142-144 (YAN) and Ser-159. Position 203 (Cys-203) interacts with [4Fe-4S] cluster. Residues 229 to 231 (HPE) and Thr-246 contribute to the iminosuccinate site. Cys-300 is a binding site for [4Fe-4S] cluster.

It belongs to the quinolinate synthase family. Type 1 subfamily. [4Fe-4S] cluster is required as a cofactor.

The protein localises to the cytoplasm. The enzyme catalyses iminosuccinate + dihydroxyacetone phosphate = quinolinate + phosphate + 2 H2O + H(+). The protein operates within cofactor biosynthesis; NAD(+) biosynthesis; quinolinate from iminoaspartate: step 1/1. Catalyzes the condensation of iminoaspartate with dihydroxyacetone phosphate to form quinolinate. This Shewanella oneidensis (strain ATCC 700550 / JCM 31522 / CIP 106686 / LMG 19005 / NCIMB 14063 / MR-1) protein is Quinolinate synthase.